The following is a 99-amino-acid chain: Small ribosomal subunit protein bS20 (99 aa).

The protein belongs to the bacterial ribosomal protein bS20 family.

Binds directly to 16S ribosomal RNA. The chain is Small ribosomal subunit protein bS20 from Caldicellulosiruptor saccharolyticus (strain ATCC 43494 / DSM 8903 / Tp8T 6331).